The chain runs to 492 residues: Protein nucleotidyltransferase YdiU (492 aa).

Positions 88, 90, 91, 111, 123, 124, 174, and 181 each coordinate ATP. Aspartate 250 serves as the catalytic Proton acceptor. Residues asparagine 251 and aspartate 260 each coordinate Mg(2+). Residue aspartate 260 coordinates ATP.

Belongs to the SELO family. Mg(2+) is required as a cofactor. Requires Mn(2+) as cofactor.

It carries out the reaction L-seryl-[protein] + ATP = 3-O-(5'-adenylyl)-L-seryl-[protein] + diphosphate. The catalysed reaction is L-threonyl-[protein] + ATP = 3-O-(5'-adenylyl)-L-threonyl-[protein] + diphosphate. The enzyme catalyses L-tyrosyl-[protein] + ATP = O-(5'-adenylyl)-L-tyrosyl-[protein] + diphosphate. It catalyses the reaction L-histidyl-[protein] + UTP = N(tele)-(5'-uridylyl)-L-histidyl-[protein] + diphosphate. It carries out the reaction L-seryl-[protein] + UTP = O-(5'-uridylyl)-L-seryl-[protein] + diphosphate. The catalysed reaction is L-tyrosyl-[protein] + UTP = O-(5'-uridylyl)-L-tyrosyl-[protein] + diphosphate. Nucleotidyltransferase involved in the post-translational modification of proteins. It can catalyze the addition of adenosine monophosphate (AMP) or uridine monophosphate (UMP) to a protein, resulting in modifications known as AMPylation and UMPylation. The polypeptide is Protein nucleotidyltransferase YdiU (Rhodopseudomonas palustris (strain TIE-1)).